The sequence spans 386 residues: Heat-inducible transcription repressor HrcA (386 aa).

Belongs to the HrcA family.

Its function is as follows. Negative regulator of class I heat shock genes (grpE-dnaK-dnaJ and groELS operons). Prevents heat-shock induction of these operons. The sequence is that of Heat-inducible transcription repressor HrcA from Chlamydia felis (strain Fe/C-56) (Chlamydophila felis).